Here is a 55-residue protein sequence, read N- to C-terminus: Large ribosomal subunit protein bL33 (55 aa).

The protein belongs to the bacterial ribosomal protein bL33 family.

This is Large ribosomal subunit protein bL33 from Dinoroseobacter shibae (strain DSM 16493 / NCIMB 14021 / DFL 12).